Consider the following 465-residue polypeptide: Serine hydroxymethyltransferase (465 aa).

An N6-(pyridoxal phosphate)lysine modification is found at K241.

The protein belongs to the SHMT family. As to quaternary structure, homotetramer. Pyridoxal 5'-phosphate serves as cofactor. As to expression, highest expression in the ovary and testis. 6- to 7-fold lower expression in hemocyte, silk gland, midgut and fat body.

The catalysed reaction is (6R)-5,10-methylene-5,6,7,8-tetrahydrofolate + glycine + H2O = (6S)-5,6,7,8-tetrahydrofolate + L-serine. It functions in the pathway one-carbon metabolism; tetrahydrofolate interconversion. Its function is as follows. Interconversion of serine and glycine. The chain is Serine hydroxymethyltransferase (692975) from Bombyx mori (Silk moth).